We begin with the raw amino-acid sequence, 226 residues long: ATP synthase F(0) complex subunit a (226 aa).

6 consecutive transmembrane segments (helical) span residues 6-26 (FASF…IILF), 68-88 (WSLM…LGLL), 97-117 (QLSM…VMGF), 138-158 (IPML…ALAV), 164-184 (ITAG…LSTI), and 189-209 (TLII…VALI).

Belongs to the ATPase A chain family. Component of the ATP synthase complex composed at least of ATP5F1A/subunit alpha, ATP5F1B/subunit beta, ATP5MC1/subunit c (homooctomer), MT-ATP6/subunit a, MT-ATP8/subunit 8, ATP5ME/subunit e, ATP5MF/subunit f, ATP5MG/subunit g, ATP5MK/subunit k, ATP5MJ/subunit j, ATP5F1C/subunit gamma, ATP5F1D/subunit delta, ATP5F1E/subunit epsilon, ATP5PF/subunit F6, ATP5PB/subunit b, ATP5PD/subunit d, ATP5PO/subunit OSCP. ATP synthase complex consists of a soluble F(1) head domain (subunits alpha(3) and beta(3)) - the catalytic core - and a membrane F(0) domain - the membrane proton channel (subunits c, a, 8, e, f, g, k and j). These two domains are linked by a central stalk (subunits gamma, delta, and epsilon) rotating inside the F1 region and a stationary peripheral stalk (subunits F6, b, d, and OSCP). Interacts with DNAJC30; interaction is direct.

The protein resides in the mitochondrion inner membrane. It carries out the reaction H(+)(in) = H(+)(out). Functionally, subunit a, of the mitochondrial membrane ATP synthase complex (F(1)F(0) ATP synthase or Complex V) that produces ATP from ADP in the presence of a proton gradient across the membrane which is generated by electron transport complexes of the respiratory chain. ATP synthase complex consist of a soluble F(1) head domain - the catalytic core - and a membrane F(1) domain - the membrane proton channel. These two domains are linked by a central stalk rotating inside the F(1) region and a stationary peripheral stalk. During catalysis, ATP synthesis in the catalytic domain of F(1) is coupled via a rotary mechanism of the central stalk subunits to proton translocation. With the subunit c (ATP5MC1), forms the proton-conducting channel in the F(0) domain, that contains two crucial half-channels (inlet and outlet) that facilitate proton movement from the mitochondrial intermembrane space (IMS) into the matrix. Protons are taken up via the inlet half-channel and released through the outlet half-channel, following a Grotthuss mechanism. The sequence is that of ATP synthase F(0) complex subunit a from Pan paniscus (Pygmy chimpanzee).